The primary structure comprises 74 residues: Large ribosomal subunit protein bL31 (74 aa).

Residues Cys-16, Cys-18, Cys-38, and Cys-41 each coordinate Zn(2+).

Belongs to the bacterial ribosomal protein bL31 family. Type A subfamily. Part of the 50S ribosomal subunit. The cofactor is Zn(2+).

Functionally, binds the 23S rRNA. The protein is Large ribosomal subunit protein bL31 of Mycolicibacterium vanbaalenii (strain DSM 7251 / JCM 13017 / BCRC 16820 / KCTC 9966 / NRRL B-24157 / PYR-1) (Mycobacterium vanbaalenii).